The chain runs to 396 residues: G-protein coupled receptor 84 (396 aa).

The Extracellular portion of the chain corresponds to 1–26 (MWNSSDANFSCYHESVLGYRYVAVSW). N-linked (GlcNAc...) asparagine glycosylation is found at Asn3 and Asn8. A helical transmembrane segment spans residues 27–47 (GVVVAVTGTVGNVLTLLALAI). At 48–57 (QPKLRTRFNL) the chain is on the cytoplasmic side. The helical transmembrane segment at 58 to 78 (LIANLTLADLLYCTLLQPFSV) threads the bilayer. Topologically, residues 79-94 (DTYLHLHWRTGATFCR) are extracellular. A helical transmembrane segment spans residues 95–115 (VFGLLLFASNSVSILTLCLIA). At 116–144 (LGRYLLIAHPKLFPQVFSAKGIVLALVST) the chain is on the cytoplasmic side. Residues 145 to 165 (WVVGVASFAPLWPIYILVPVV) traverse the membrane as a helical segment. Residues 166 to 180 (CTCSFDRIRGRPYTT) are Extracellular-facing. Residues 181 to 201 (ILMGIYFVLGLSSVGIFYCLI) traverse the membrane as a helical segment. At 202–320 (HRQVKRAAQA…SSEFGKVTRM (119 aa)) the chain is on the cytoplasmic side. Phosphoserine occurs at positions 221 and 224. Residues 244–311 (RLASGGPSEG…KGARRAPDSS (68 aa)) form a disordered region. The segment covering 247–260 (SGGPSEGISSEPVS) has biased composition (low complexity). A phosphothreonine mark is found at Thr263 and Thr264. The chain crosses the membrane as a helical span at residues 321–341 (CFAVFLCFALSYIPFLLLNIL). The Extracellular portion of the chain corresponds to 342-352 (DARVQAPRVVH). Residues 353–373 (MLAANLTWLNGCINPVLYAAM) form a helical membrane-spanning segment. The Cytoplasmic portion of the chain corresponds to 374-396 (NRQFRQAYGSILKRGPRSFHRLH).

The protein belongs to the G-protein coupled receptor 1 family. As to quaternary structure, interacts with ARRB2 and ARR3. Phosphorylated by a subset of GPR84-activating ligands. Constitutively phosphorylated at Ser-221 and Ser-224 in the absence of 2-HTP. By contrast, Thr-263 and Thr-264 are phosphorylated only following prior cell treatment with 2-HTP. Expressed predominantly in hematopoietic tissues. High levels detected in the bone marrow and lower levels in the peripheral leukocytes and lung. Also expressed in brain, heart, muscle, colon, thymus, spleen, kidney, liver, placenta and intestine. Within the leukocyte population expression is higher in neutrophils and eosinophils relative to T- or B-lymphocytes.

Its subcellular location is the cell membrane. G protein-coupled receptor that responds endogenously to dietary fatty acids or nutrient, specifically medium-chain free fatty acid (FFA) with carbon chain lengths of C9 to C14. Capric acid (C10:0), undecanoic acid (C11:0) and lauric acid (C12:0) are the most potent agonists. In immune cells, functions as a pro-inflammatory receptor via 6-OAU and promotes the expression of pro-inflammatory mediators such as TNFalpha, IL-6 and IL-12B as well as stimulating chemotactic responses through activation of signaling mediators AKT, ERK and NF-kappa-B. In addition, triggers increased bacterial adhesion and phagocytosis in macrophages and regulates pro-inflammatory function via enhancing NLRP3 inflammasome activation. Also plays an important role in inflammation by modulating neutrophil functions. Mechanistically, promotes neutrophil chemotaxis, reactive oxygen species (ROS) production and degranulation via LYN-AKT/ERK pathway. To regulate ROS, communicates with the two formyl peptide receptors FPR2 and FPR1 to control the NADPH oxidase activity in neutrophils. The polypeptide is G-protein coupled receptor 84 (GPR84) (Homo sapiens (Human)).